The sequence spans 331 residues: Methionyl-tRNA formyltransferase (331 aa).

111–114 (SLLP) contributes to the (6S)-5,6,7,8-tetrahydrofolate binding site.

Belongs to the Fmt family.

The enzyme catalyses L-methionyl-tRNA(fMet) + (6R)-10-formyltetrahydrofolate = N-formyl-L-methionyl-tRNA(fMet) + (6S)-5,6,7,8-tetrahydrofolate + H(+). Attaches a formyl group to the free amino group of methionyl-tRNA(fMet). The formyl group appears to play a dual role in the initiator identity of N-formylmethionyl-tRNA by promoting its recognition by IF2 and preventing the misappropriation of this tRNA by the elongation apparatus. This chain is Methionyl-tRNA formyltransferase, found in Thermosynechococcus vestitus (strain NIES-2133 / IAM M-273 / BP-1).